The chain runs to 661 residues: CD180 antigen (661 aa).

Positions 1–23 (MAFDVSCFFWVVLFSAGCKVITS) are cleaved as a signal peptide. Residues 24-626 (WDQMCIEKEA…KLSDVKLSCG (603 aa)) lie on the Extracellular side of the membrane. An LRRNT domain is found at 33–53 (ANKTYNCENLGLSEIPDTLPN). N-linked (GlcNAc...) asparagine glycans are attached at residues asparagine 34, asparagine 53, asparagine 70, and asparagine 78. LRR repeat units lie at residues 54 to 75 (TTEFLEFSFNFLPTIHNRTFSR), 78 to 99 (NLTFLDLTRCQINWIHEDTFQS), 102 to 123 (QLSTLVLTGNPLIFMAETSLNG), 126 to 147 (SLKHLFLIQTGISNLEFIPVHN), 150 to 171 (NLESLYLGSNHISSIKFPKDFP), 174 to 195 (NLKVLDFQNNAIHYISREDMRS), and 201 to 221 (NLSLNFNGNNVKGIELGAFDS). N-linked (GlcNAc...) asparagine glycosylation is found at asparagine 201, asparagine 234, and asparagine 244. 5 LRR repeats span residues 275–296 (SVESLNLQEHRFSDISSTTFQC), 299–320 (QLQELDLTATHLKGLPSGMKGL), 322–343 (LLKKLVLSVNHFDQLCQISAAN), 346–366 (SLTHLYIRGNVKKLHLGVGCL), and 371–391 (NLQTLDLSHNDIEASDCCSLQ). N-linked (GlcNAc...) asparagine glycans are attached at residues asparagine 394 and asparagine 402. LRR repeat units follow at residues 397-418 (HLQTLNLSHNEPLGLQSQAFKE), 421-442 (QLELLDLAFTRLHINAPQSPFQ), 446-466 (FLQVLNLTYCFLDTSNQHLLA), 470-493 (VLRHLNLKGNHFQDGTITKTNLLQ), 497-518 (SLEVLILSSCGLLSIDQQAFHS), 521-544 (KMSHVDLSHNSLTCDSIDSLSHLK), and 546-564 (IYLNLAANSINIISPRLLP). The N-linked (GlcNAc...) asparagine glycan is linked to asparagine 451. Asparagine 573 carries N-linked (GlcNAc...) asparagine glycosylation. The LRRCT domain maps to 577 to 627 (NPLDCTCSNIHFLTWYKENLHKLEGSEETTCANPPSLRGVKLSDVKLSCGI). Residues 627–650 (ITAIGIFFLIVFLLLLAILLFFAV) traverse the membrane as a helical segment. Residues 651 to 661 (KYLLRWKYQHI) are Cytoplasmic-facing.

Belongs to the Toll-like receptor family. As to quaternary structure, M-shaped tetramer of two CD180-LY86 heterodimers. As to expression, expressed mainly on mature peripherical B cells. Detected in spleen, lymph node and appendix. Not detected in pre-B and -T cells.

It is found in the cell membrane. Its function is as follows. May cooperate with MD-1 and TLR4 to mediate the innate immune response to bacterial lipopolysaccharide (LPS) in B-cells. Leads to NF-kappa-B activation. Also involved in the life/death decision of B-cells. This Homo sapiens (Human) protein is CD180 antigen (CD180).